We begin with the raw amino-acid sequence, 156 residues long: Small ribosomal subunit protein uS7 (156 aa).

This sequence belongs to the universal ribosomal protein uS7 family. In terms of assembly, part of the 30S ribosomal subunit. Contacts proteins S9 and S11.

Functionally, one of the primary rRNA binding proteins, it binds directly to 16S rRNA where it nucleates assembly of the head domain of the 30S subunit. Is located at the subunit interface close to the decoding center, probably blocks exit of the E-site tRNA. The sequence is that of Small ribosomal subunit protein uS7 from Azoarcus sp. (strain BH72).